The sequence spans 236 residues: 2,3,4,5-tetrahydropyridine-2,6-dicarboxylate N-acetyltransferase (236 aa).

The protein belongs to the transferase hexapeptide repeat family. DapH subfamily.

It carries out the reaction (S)-2,3,4,5-tetrahydrodipicolinate + acetyl-CoA + H2O = L-2-acetamido-6-oxoheptanedioate + CoA. It functions in the pathway amino-acid biosynthesis; L-lysine biosynthesis via DAP pathway; LL-2,6-diaminopimelate from (S)-tetrahydrodipicolinate (acetylase route): step 1/3. Its function is as follows. Catalyzes the transfer of an acetyl group from acetyl-CoA to tetrahydrodipicolinate. The chain is 2,3,4,5-tetrahydropyridine-2,6-dicarboxylate N-acetyltransferase from Clostridium beijerinckii (strain ATCC 51743 / NCIMB 8052) (Clostridium acetobutylicum).